A 406-amino-acid polypeptide reads, in one-letter code: L-methionine gamma-lyase (406 aa).

Residues 76–78 (YQR) and 106–107 (GM) each bind pyridoxal 5'-phosphate. Residue tyrosine 132 participates in L-homocysteine binding. 219 to 221 (SAT) provides a ligand contact to pyridoxal 5'-phosphate. Lysine 222 carries the N6-(pyridoxal phosphate)lysine modification. Arginine 380 lines the L-homocysteine pocket. Arginine 380 is an L-methionine binding site.

Belongs to the trans-sulfuration enzymes family. L-methionine gamma-lyase subfamily. In terms of assembly, homotetramer. It depends on pyridoxal 5'-phosphate as a cofactor.

The catalysed reaction is L-methionine + H2O = methanethiol + 2-oxobutanoate + NH4(+). It carries out the reaction L-homocysteine + H2O = 2-oxobutanoate + hydrogen sulfide + NH4(+) + H(+). Its activity is regulated as follows. Is inhibited in vitro by carbonyl reagents, completely inactivated by DL-propargylglycine, and unaffected by metal-chelating agents. Functionally, catalyzes the alpha,gamma-elimination of L-methionine to produce methanethiol, 2-oxobutanoate and ammonia. May be responsible for the production of methanethiol associated with desirable Cheddar-type sulfur notes during cheese ripening. Is also able to catalyze the alpha,gamma-elimination of L-homocysteine and DL-selenomethionine, but has no activity toward L-cysteine, L-cystathionine, S-adenosyl-L-homocysteine and D-methionine. This Brevibacterium aurantiacum protein is L-methionine gamma-lyase.